The chain runs to 387 residues: Protein NDRG3 (387 aa).

A disordered region spans residues 329-387 (PSASMTRLVRSRTHSASSSGSMEMPRSRSHTSNAQLQSTSNNSLSNQIQETPHTIELSC). A compositionally biased stretch (low complexity) spans 359 to 377 (TSNAQLQSTSNNSLSNQIQ).

This sequence belongs to the NDRG family.

This chain is Protein NDRG3, found in Xenopus tropicalis (Western clawed frog).